The sequence spans 327 residues: Cobalamin biosynthesis protein CobD (327 aa).

Transmembrane regions (helical) follow at residues 63-83 (VGILVLLAGATALGVVLARLF), 84-104 (DVLGALGSLLEVVTVAVFLAQ), 158-178 (FSDGVVAPAFWYAVAGLPGLL), and 305-325 (VFYAACSVMTFAFAAAALPLL).

Belongs to the CobD/CbiB family.

It localises to the cell membrane. The protein operates within cofactor biosynthesis; adenosylcobalamin biosynthesis. Its function is as follows. Converts cobyric acid to cobinamide by the addition of aminopropanol on the F carboxylic group. This chain is Cobalamin biosynthesis protein CobD, found in Rhizobium meliloti (strain 1021) (Ensifer meliloti).